We begin with the raw amino-acid sequence, 312 residues long: Oxidoreductase NAD-binding domain-containing protein 1 (312 aa).

Positions 1–17 (MACAAVMIPGLLRCSVG) are cleaved as a signal peptide. An FAD-binding FR-type domain is found at 50–186 (HMERTASVLR…GGVGINPLLS (137 aa)). An NAD(+)-binding site is contributed by 178 to 183 (GVGINP).

In Homo sapiens (Human), this protein is Oxidoreductase NAD-binding domain-containing protein 1 (OXNAD1).